We begin with the raw amino-acid sequence, 250 residues long: Hydroxyacylglutathione hydrolase (250 aa).

Zn(2+) contacts are provided by His53, His55, Asp57, His58, His110, Asp127, and His165.

The protein belongs to the metallo-beta-lactamase superfamily. Glyoxalase II family. As to quaternary structure, monomer. Requires Zn(2+) as cofactor.

It catalyses the reaction an S-(2-hydroxyacyl)glutathione + H2O = a 2-hydroxy carboxylate + glutathione + H(+). It participates in secondary metabolite metabolism; methylglyoxal degradation; (R)-lactate from methylglyoxal: step 2/2. Its function is as follows. Thiolesterase that catalyzes the hydrolysis of S-D-lactoyl-glutathione to form glutathione and D-lactic acid. In Photorhabdus laumondii subsp. laumondii (strain DSM 15139 / CIP 105565 / TT01) (Photorhabdus luminescens subsp. laumondii), this protein is Hydroxyacylglutathione hydrolase.